The sequence spans 215 residues: Penicillin-binding protein activator LpoB (215 aa).

Residues 1–19 (MMKMCRYALITALAIFLAG) form the signal peptide. A lipid anchor (N-palmitoyl cysteine) is attached at cysteine 20. Cysteine 20 carries S-diacylglycerol cysteine lipidation. Residues 28–78 (APVEEAKPQPQQPAQPQPTVPTVPAVPSVPAQPGPIEHQDQQSGQPAPRVR) form a disordered region. Residues 37 to 48 (PQQPAQPQPTVP) show a composition bias toward pro residues. Residues 49-58 (TVPAVPSVPA) show a composition bias toward low complexity.

The protein belongs to the LpoB family. As to quaternary structure, interacts with PBP1b.

The protein resides in the cell outer membrane. In terms of biological role, regulator of peptidoglycan synthesis that is essential for the function of penicillin-binding protein 1B (PBP1b). This chain is Penicillin-binding protein activator LpoB, found in Klebsiella pneumoniae subsp. pneumoniae (strain ATCC 700721 / MGH 78578).